Consider the following 499-residue polypeptide: Protein nucleotidyltransferase YdiU (499 aa).

The ATP site is built by Gly-95, Gly-97, Arg-98, Lys-117, Asp-129, Gly-130, Arg-180, and Arg-187. Catalysis depends on Asp-256, which acts as the Proton acceptor. Mg(2+) contacts are provided by Asn-257 and Asp-266. Asp-266 provides a ligand contact to ATP.

The protein belongs to the SELO family. The cofactor is Mg(2+). It depends on Mn(2+) as a cofactor.

The enzyme catalyses L-seryl-[protein] + ATP = 3-O-(5'-adenylyl)-L-seryl-[protein] + diphosphate. It carries out the reaction L-threonyl-[protein] + ATP = 3-O-(5'-adenylyl)-L-threonyl-[protein] + diphosphate. The catalysed reaction is L-tyrosyl-[protein] + ATP = O-(5'-adenylyl)-L-tyrosyl-[protein] + diphosphate. It catalyses the reaction L-histidyl-[protein] + UTP = N(tele)-(5'-uridylyl)-L-histidyl-[protein] + diphosphate. The enzyme catalyses L-seryl-[protein] + UTP = O-(5'-uridylyl)-L-seryl-[protein] + diphosphate. It carries out the reaction L-tyrosyl-[protein] + UTP = O-(5'-uridylyl)-L-tyrosyl-[protein] + diphosphate. Its function is as follows. Nucleotidyltransferase involved in the post-translational modification of proteins. It can catalyze the addition of adenosine monophosphate (AMP) or uridine monophosphate (UMP) to a protein, resulting in modifications known as AMPylation and UMPylation. This chain is Protein nucleotidyltransferase YdiU, found in Dechloromonas aromatica (strain RCB).